The primary structure comprises 354 residues: Guanine nucleotide-binding protein G(i) subunit alpha-1 (354 aa).

G2 carries the N-myristoyl glycine lipid modification. Residue C3 is the site of S-palmitoyl cysteine attachment. One can recognise a G-alpha domain in the interval 32–354 (REVKLLLLGA…KNNLKDCGLF (323 aa)). A G1 motif region spans residues 35-48 (KLLLLGAGESGKST). GTP is bound by residues 43–48 (ESGKST), 150–151 (DS), and 175–178 (LRTR). Position 47 (S47) interacts with Mg(2+). Residues 173–181 (DVLRTRVKT) form a G2 motif region. Position 181 (T181) interacts with Mg(2+). A G3 motif region spans residues 196 to 205 (FKMFDVGGQR). GTP is bound by residues 200 to 204 (DVGGQ), 269 to 272 (NKKD), and A326. The G4 motif stretch occupies residues 265-272 (ILFLNKKD). The segment at 324-329 (TCATDT) is G5 motif.

Belongs to the G-alpha family. G(i/o/t/z) subfamily. As to quaternary structure, heterotrimeric G proteins are composed of 3 units; alpha, beta and gamma. The alpha chain contains the guanine nucleotide binding site. Part of a spindle orientation complex. Identified in complex with the beta subunit GNB1 and the gamma subunit GNG1. Identified in complex with the beta subunit GNB1 and the gamma subunit GNG2. GTP binding causes dissociation of the heterotrimer, liberating the individual subunits so that they can interact with downstream effector proteins. Post-translationally, myristoylation at Gly-2 is required for membrane anchoring before palmitoylation. In terms of processing, palmitoylation at Cys-3 varies with membrane lipid composition.

The protein resides in the nucleus. The protein localises to the cytoplasm. It is found in the cell membrane. Its subcellular location is the cytoskeleton. It localises to the microtubule organizing center. The protein resides in the centrosome. The protein localises to the cell cortex. It is found in the membrane. The catalysed reaction is GTP + H2O = GDP + phosphate + H(+). In terms of biological role, guanine nucleotide-binding proteins (G proteins) function as transducers downstream of G protein-coupled receptors (GPCRs) in numerous signaling cascades. The alpha chain contains the guanine nucleotide binding site and alternates between an active, GTP-bound state and an inactive, GDP-bound state. Signaling by an activated GPCR promotes GDP release and GTP binding. The alpha subunit has a low GTPase activity that converts bound GTP to GDP, thereby terminating the signal. Both GDP release and GTP hydrolysis are modulated by numerous regulatory proteins. Signaling is mediated via effector proteins, such as adenylate cyclase. Inhibits adenylate cyclase activity, leading to decreased intracellular cAMP levels. Required for cortical dynein-dynactin complex recruitment during metaphase. The protein is Guanine nucleotide-binding protein G(i) subunit alpha-1 (gnai1) of Xenopus laevis (African clawed frog).